We begin with the raw amino-acid sequence, 653 residues long: Forkhead box protein O1 (653 aa).

2 disordered regions span residues 1-64 (MAEA…ASAA) and 117-156 (LHPA…SRRN). T24 carries the post-translational modification Phosphothreonine; by PKB/AKT1 or PKB/AKT2 and SGK1. The segment covering 35–64 (SNSATSSPAPSGGATANPDASAGLPPASAA) has biased composition (low complexity). Residues 119 to 140 (PAPPQPPPPGPLSQHPPVPPAA) are compositionally biased toward pro residues. Positions 157-233 (AWGNLSYADL…VQNEGTGKSS (77 aa)) form a DNA-binding region, fork-head. 2 DNA-binding regions span residues 209-216 (NSIRHNLS) and 232-235 (SSWW). S210 is subject to Phosphoserine; by STK4/MST1. S216, S232, and S233 each carry phosphoserine. The tract at residues 232 to 335 (SSWWMLNPEG…FSPIMTEQDD (104 aa)) is disordered. 2 positions are modified to N6-acetyllysine: K243 and K246. S247 carries the phosphoserine; by CDK1 modification. R249 and R251 each carry omega-N-methylarginine; by PRMT1. A Nuclear localization signal motif is present at residues 249–251 (RRR). S254 is modified (phosphoserine; by PKB/AKT1 and SGK1). N6-acetyllysine is present on residues K260, K263, and K272. Residues 281-561 (GAGDSPGSQF…RLTPVKTPLQ (281 aa)) are sufficient for interaction with NLK. S285 and S296 each carry phosphoserine. The segment covering 307 to 324 (NWSTFRPRTSSNASTISG) has biased composition (polar residues). S317 bears the Phosphoserine; by PKB/AKT1 or PKB/AKT2 mark. At S320 the chain carries Phosphoserine; by CK1 and SGK1. The residue at position 323 (S323) is a Phosphoserine. S327 carries the phosphoserine; by DYRK1A modification. T331 is modified (phosphothreonine). The tract at residues 361–457 (SEISNPENME…GGLNQFNCAQ (97 aa)) is required for interaction with RUNX2. Residue K421 is modified to N6-acetyllysine. A Required for interaction with SIRT1 motif is present at residues 460 to 464 (LKELL).

Interacts with LRPPRC. Interacts with RUNX2; the interaction inhibits RUNX2 transcriptional activity and mediates the IGF1/insulin-dependent BGLAP expression in osteoblasts Interacts with PPP2R1A; the interaction regulates the dephosphorylation of FOXO1 at Thr-24 and Ser-254 leading to its nuclear import. Interacts with NLK. Interacts with SIRT1; the interaction results in the deacetylation of FOXO1 leading to activation of FOXO1-mediated transcription of genes involved in DNA repair and stress resistance. Binds to CDK1. Interacts with the 14-3-3 proteins, YWHAG and YWHAZ; the interactions require insulin-stimulated phosphorylation on Thr-24, promote nuclear exit and loss of transcriptional activity. Interacts with SKP2; the interaction ubiquitinates FOXO1 leading to its proteasomal degradation. The interaction requires the presence of KRIT1. Interacts (via the C-terminal half) with ATF4 (via its DNA-binding domain); the interaction occurs in osteoblasts, regulates glucose homeostasis via suppression of beta-cell proliferation and subsequent decrease in insulin production. Interacts with PRMT1; the interaction methylates FOXO1, prevents PKB/AKT1 phosphorylation and retains FOXO1 in the nucleus. Interacts with EP300 and CREBBP; the interactions acetylate FOXO1. Interacts with SIRT2; the interaction is disrupted in response to oxidative stress or serum deprivation, leading to increased level of acetylated FOXO1, which promotes stress-induced autophagy by stimulating E1-like activating enzyme ATG7. Interacts (acetylated form) with ATG7; the interaction is increased in response to oxidative stress or serum deprivation and promotes the autophagic process leading to cell death. Interacts (acetylated form) with PPARG. Interacts with XBP1; this interaction is direct and leads to FOXO1 ubiquitination and degradation via the proteasome pathway. Interacts with WDFY2. Forms a complex with WDFY2 and AKT1. Interacts with CRY1. Interacts with PPIA/CYPA; the interaction promotes FOXO1 dephosphorylation, nuclear accumulation and transcriptional activity. Interacts with TOX4; FOXO1 is required for full induction of TOX4-dependent activity and the interaction is inhibited by insulin. Interacts (when phosphorylated on Ser-254) with STUB1/CHIP. In terms of processing, phosphorylation by NLK promotes nuclear export and inhibits the transcriptional activity. In response to growth factors, phosphorylation on Thr-24, Ser-254 and Ser-320 by PKB/AKT1 promotes nuclear export and inactivation of transactivational activity. Phosphorylation on Thr-24 is required for binding 14-3-3 proteins. Phosphorylation of Ser-254 decreases DNA-binding activity and promotes the phosphorylation of Thr-24 and Ser-317, permitting phosphorylation of Ser-320 and Ser-323, probably by CDK1, leading to nuclear exclusion and loss of function. Stress signals, such as response to oxygen or nitric oxide, attenuate the PKB/AKT1-mediated phosphorylation leading to nuclear retention. Phosphorylation of Ser-327 is independent of IGF1 and leads to reduced function. Dephosphorylated on Thr-24 and Ser-254 by PP2A in beta-cells under oxidative stress leading to nuclear retention. Phosphorylation of Ser-247 by CDK1 disrupts binding of 14-3-3 proteins leading to nuclear accumulation and has no effect on DNA binding nor transcriptional activity. Phosphorylation by STK4/MST1 on Ser-210, upon oxidative stress, inhibits binding to 14-3-3 proteins and nuclear export. PPIA/CYPA promotes its dephosphorylation on Ser-254. Post-translationally, ubiquitinated by SKP2. Ubiquitination leads to proteasomal degradation. Ubiquitinated by STUB1/CHIP; when Ser-254 is phosphorylated. Methylation inhibits AKT1-mediated phosphorylation at Ser-254 and is increased by oxidative stress. In terms of processing, acetylated. Acetylation at Lys-260 and Lys-272 are necessary for autophagic cell death induction. Deacetylated by SIRT2 in response to oxidative stress or serum deprivation, thereby negatively regulating FOXO1-mediated autophagic cell death. Once in the nucleus, acetylated by CREBBP/EP300. Acetylation diminishes the interaction with target DNA and attenuates the transcriptional activity. It increases the phosphorylation at Ser-254. Deacetylation by SIRT1 results in reactivation of the transcriptional activity. Oxidative stress by hydrogen peroxide treatment appears to promote deacetylation and uncoupling of insulin-induced phosphorylation. By contrast, resveratrol acts independently of acetylation. Acetylated at Lys-421, promoting its localization to the nucleus and transcription factor activity. Deacetylation at Lys-421 by SIRT6, promotes its translocation into the cytoplasm, preventing its transcription factor activity. Deacetylation and subsequent inhibition by SIRT6 has different effects depending on cell types: it inhibits gluconeogenesis in hepatocytes, promotes glucose sensing in pancreatic beta-cells and regulates lipid catabolism in brown adipocytes.

The protein localises to the cytoplasm. It is found in the nucleus. Functionally, transcription factor that is the main target of insulin signaling and regulates metabolic homeostasis in response to oxidative stress. Binds to the insulin response element (IRE) with consensus sequence 5'-TT[G/A]TTTTG-3' and the related Daf-16 family binding element (DBE) with consensus sequence 5'-TT[G/A]TTTAC-3'. Activity suppressed by insulin. Main regulator of redox balance and osteoblast numbers and controls bone mass. Orchestrates the endocrine function of the skeleton in regulating glucose metabolism. Also acts as a key regulator of chondrogenic commitment of skeletal progenitor cells in response to lipid availability: when lipids levels are low, translocates to the nucleus and promotes expression of SOX9, which induces chondrogenic commitment and suppresses fatty acid oxidation. Acts synergistically with ATF4 to suppress osteocalcin/BGLAP activity, increasing glucose levels and triggering glucose intolerance and insulin insensitivity. Also suppresses the transcriptional activity of RUNX2, an upstream activator of osteocalcin/BGLAP. Acts as an inhibitor of glucose sensing in pancreatic beta cells by acting as a transcription repressor and suppressing expression of PDX1. In hepatocytes, promotes gluconeogenesis by acting together with PPARGC1A and CEBPA to activate the expression of genes such as IGFBP1, G6PC1 and PCK1. Also promotes gluconeogenesis by directly promoting expression of PPARGC1A and G6PC1. Important regulator of cell death acting downstream of CDK1, PKB/AKT1 and STK4/MST1. Promotes neural cell death. Mediates insulin action on adipose tissue. Regulates the expression of adipogenic genes such as PPARG during preadipocyte differentiation and, adipocyte size and adipose tissue-specific gene expression in response to excessive calorie intake. Regulates the transcriptional activity of GADD45A and repair of nitric oxide-damaged DNA in beta-cells. Required for the autophagic cell death induction in response to starvation or oxidative stress in a transcription-independent manner. Mediates the function of MLIP in cardiomyocytes hypertrophy and cardiac remodeling. Positive regulator of apoptosis in cardiac smooth muscle cells as a result of its transcriptional activation of pro-apoptotic genes. Regulates endothelial cell (EC) viability and apoptosis in a PPIA/CYPA-dependent manner via transcription of CCL2 and BCL2L11 which are involved in EC chemotaxis and apoptosis. The sequence is that of Forkhead box protein O1 (FOXO1) from Ictidomys tridecemlineatus (Thirteen-lined ground squirrel).